We begin with the raw amino-acid sequence, 288 residues long: Protoheme IX farnesyltransferase (288 aa).

9 helical membrane passes run 6–26, 44–64, 89–109, 111–131, 138–158, 169–189, 213–233, 238–258, and 268–288; these read VILY…LLSL, FLDS…NNVI, LAIL…VKFI, VVCF…YSFF, ISTI…YCSV, LLIM…ILHF, IILH…INSI, LIIS…ELTI, and IFRW…FGFV.

The protein belongs to the UbiA prenyltransferase family. Protoheme IX farnesyltransferase subfamily.

It localises to the cell membrane. The enzyme catalyses heme b + (2E,6E)-farnesyl diphosphate + H2O = Fe(II)-heme o + diphosphate. Its pathway is porphyrin-containing compound metabolism; heme O biosynthesis; heme O from protoheme: step 1/1. Its function is as follows. Converts heme B (protoheme IX) to heme O by substitution of the vinyl group on carbon 2 of heme B porphyrin ring with a hydroxyethyl farnesyl side group. The chain is Protoheme IX farnesyltransferase from Buchnera aphidicola subsp. Baizongia pistaciae (strain Bp).